A 248-amino-acid chain; its full sequence is 3-deoxy-manno-octulosonate cytidylyltransferase (248 aa).

Belongs to the KdsB family.

The protein resides in the cytoplasm. The enzyme catalyses 3-deoxy-alpha-D-manno-oct-2-ulosonate + CTP = CMP-3-deoxy-beta-D-manno-octulosonate + diphosphate. It functions in the pathway nucleotide-sugar biosynthesis; CMP-3-deoxy-D-manno-octulosonate biosynthesis; CMP-3-deoxy-D-manno-octulosonate from 3-deoxy-D-manno-octulosonate and CTP: step 1/1. It participates in bacterial outer membrane biogenesis; lipopolysaccharide biosynthesis. Functionally, activates KDO (a required 8-carbon sugar) for incorporation into bacterial lipopolysaccharide in Gram-negative bacteria. This Escherichia coli O127:H6 (strain E2348/69 / EPEC) protein is 3-deoxy-manno-octulosonate cytidylyltransferase.